Here is a 363-residue protein sequence, read N- to C-terminus: Peptide chain release factor 1 (363 aa).

N5-methylglutamine is present on glutamine 236. The interval lysine 286 to serine 305 is disordered.

The protein belongs to the prokaryotic/mitochondrial release factor family. Post-translationally, methylated by PrmC. Methylation increases the termination efficiency of RF1.

It localises to the cytoplasm. Peptide chain release factor 1 directs the termination of translation in response to the peptide chain termination codons UAG and UAA. This is Peptide chain release factor 1 from Wolbachia pipientis subsp. Culex pipiens (strain wPip).